A 146-amino-acid polypeptide reads, in one-letter code: Anti-sigma F factor (146 aa).

Belongs to the anti-sigma-factor family.

The catalysed reaction is L-seryl-[protein] + ATP = O-phospho-L-seryl-[protein] + ADP + H(+). It carries out the reaction L-threonyl-[protein] + ATP = O-phospho-L-threonyl-[protein] + ADP + H(+). Functionally, binds to sigma F and blocks its ability to form an RNA polymerase holoenzyme (E-sigma F). Phosphorylates SpoIIAA on a serine residue. This phosphorylation may enable SpoIIAA to act as an anti-anti-sigma factor that counteracts SpoIIAB and thus releases sigma F from inhibition. This chain is Anti-sigma F factor, found in Bacillus anthracis (strain A0248).